The chain runs to 311 residues: tRNA-cytidine(32) 2-sulfurtransferase (311 aa).

A PP-loop motif motif is present at residues 47–52 (SGGKDS). [4Fe-4S] cluster is bound by residues Cys-122, Cys-125, and Cys-213.

This sequence belongs to the TtcA family. As to quaternary structure, homodimer. Requires Mg(2+) as cofactor. The cofactor is [4Fe-4S] cluster.

It localises to the cytoplasm. It catalyses the reaction cytidine(32) in tRNA + S-sulfanyl-L-cysteinyl-[cysteine desulfurase] + AH2 + ATP = 2-thiocytidine(32) in tRNA + L-cysteinyl-[cysteine desulfurase] + A + AMP + diphosphate + H(+). The protein operates within tRNA modification. Catalyzes the ATP-dependent 2-thiolation of cytidine in position 32 of tRNA, to form 2-thiocytidine (s(2)C32). The sulfur atoms are provided by the cysteine/cysteine desulfurase (IscS) system. The chain is tRNA-cytidine(32) 2-sulfurtransferase from Salmonella arizonae (strain ATCC BAA-731 / CDC346-86 / RSK2980).